A 618-amino-acid polypeptide reads, in one-letter code: 2-succinyl-5-enolpyruvyl-6-hydroxy-3-cyclohexene-1-carboxylate synthase (618 aa).

The segment at 192-215 is disordered; it reads DPVAERGRDGPYVDVTPGSPEPGD.

The protein belongs to the TPP enzyme family. MenD subfamily. Homodimer. The cofactor is Mg(2+). Requires Mn(2+) as cofactor. Thiamine diphosphate serves as cofactor.

The catalysed reaction is isochorismate + 2-oxoglutarate + H(+) = 5-enolpyruvoyl-6-hydroxy-2-succinyl-cyclohex-3-ene-1-carboxylate + CO2. The protein operates within quinol/quinone metabolism; 1,4-dihydroxy-2-naphthoate biosynthesis; 1,4-dihydroxy-2-naphthoate from chorismate: step 2/7. It functions in the pathway quinol/quinone metabolism; menaquinone biosynthesis. Functionally, catalyzes the thiamine diphosphate-dependent decarboxylation of 2-oxoglutarate and the subsequent addition of the resulting succinic semialdehyde-thiamine pyrophosphate anion to isochorismate to yield 2-succinyl-5-enolpyruvyl-6-hydroxy-3-cyclohexene-1-carboxylate (SEPHCHC). The sequence is that of 2-succinyl-5-enolpyruvyl-6-hydroxy-3-cyclohexene-1-carboxylate synthase from Halorubrum lacusprofundi (strain ATCC 49239 / DSM 5036 / JCM 8891 / ACAM 34).